A 100-amino-acid chain; its full sequence is MNLTPREKDKLLISMAAMVARRRLERGVKLNYPEAIALISDFVVEGARDGRPVAELMEAGAHVIGRDQVMEGIAEMIHDVQVEATFPDGTKLVTVHEPIR.

This sequence belongs to the urease gamma subunit family. Heterotrimer of UreA (gamma), UreB (beta) and UreC (alpha) subunits. Three heterotrimers associate to form the active enzyme.

It localises to the cytoplasm. It carries out the reaction urea + 2 H2O + H(+) = hydrogencarbonate + 2 NH4(+). It participates in nitrogen metabolism; urea degradation; CO(2) and NH(3) from urea (urease route): step 1/1. In Rhizobium etli (strain CIAT 652), this protein is Urease subunit gamma.